Reading from the N-terminus, the 249-residue chain is Aquaporin (249 aa).

Residues 1–11 (MTRKWIKKLQS) are Cytoplasmic-facing. Residues 12–32 (YIGEFFASFIFGFAVYTSIIG) form a helical membrane-spanning segment. The Extracellular portion of the chain corresponds to 33–39 (SAQTGQS). The helical transmembrane segment at 40–60 (AGPIIVALTIALSGVAIIYSF) threads the bilayer. At 61 to 83 (CDITVAHFNPAITFSAMCFRRLP) the chain is on the cytoplasmic side. Positions 69–71 (NPA) match the NPA motif. A helical transmembrane segment spans residues 84–104 (FFGGIFIIIFQVAGFIIAGLA). Topologically, residues 105–133 (SVAVLPGKYKNKLEIARPKRVADNVSRGR) are extracellular. The helical transmembrane segment at 134–154 (IFGTEFFLTAILVYVAFAVGV) threads the bilayer. Residues 155 to 179 (NPYTPPKDEHGDQLDPDEGLTEGRK) are Cytoplasmic-facing. A helical membrane pass occupies residues 180–200 (ITAPLAIGFTLGFCALLGIAS). The Extracellular segment spans residues 201-223 (SGGAFNPGIVLSPMILTGTWDFW). The short motif at 206–208 (NPG) is the NPG element. The helical transmembrane segment at 224–246 (WVYLLGQFSGGLLGGGLQRFLLY) threads the bilayer. The Cytoplasmic portion of the chain corresponds to 247–249 (KIF).

The protein belongs to the MIP/aquaporin (TC 1.A.8) family.

Its subcellular location is the cell membrane. Water channel required to facilitate the transport of water across membranes. Involved in osmotolerance. The sequence is that of Aquaporin (AQP) from Vairimorpha ceranae (strain BRL01) (Microsporidian parasite).